A 452-amino-acid polypeptide reads, in one-letter code: COP9 signalosome complex subunit 11 (452 aa).

The region spanning 205-374 is the PCI domain; sequence FYIEDPKTMM…ISYSKRSIVD (170 aa).

Component of a COP9 signalosome-like (CSN) complex.

It localises to the cytoplasm. The protein localises to the nucleus. Its function is as follows. Component of the COP9 signalosome (CSN) complex that acts as an regulator of the ubiquitin (Ubl) conjugation pathway by mediating the deneddylation of the cullin subunit of SCF-type E3 ubiquitin-protein ligase complexes The CSN complex is involved in the regulation of the mating pheromone response. PCI8 may also be involved in transcriptional and translational control. The polypeptide is COP9 signalosome complex subunit 11 (PCI8) (Candida glabrata (strain ATCC 2001 / BCRC 20586 / JCM 3761 / NBRC 0622 / NRRL Y-65 / CBS 138) (Yeast)).